The sequence spans 187 residues: Large ribosomal subunit protein eL18y (187 aa).

Positions 151-187 (FGPAPGVPHSHSKPYVRAKGRKFEKARGKRKSRGFKV) are disordered. Basic residues-rich tracts occupy residues 160–170 (SHSKPYVRAKG) and 177–187 (RGKRKSRGFKV).

It belongs to the eukaryotic ribosomal protein eL18 family. Interacts with NIK1. Interacts directly with EXA1. Ubiquitous.

It localises to the cytoplasm. This Arabidopsis thaliana (Mouse-ear cress) protein is Large ribosomal subunit protein eL18y (RPL18B).